The primary structure comprises 174 residues: Disulfide bond formation protein B (174 aa).

At 1–14 (MLNFLNICSKTRKS) the chain is on the cytoplasmic side. A helical transmembrane segment spans residues 15 to 31 (WVLLIFTVVILELIALY). At 32–49 (LQHIVLIKPCVLCVYQRC) the chain is on the periplasmic side. A disulfide bridge connects residues Cys41 and Cys44. A helical transmembrane segment spans residues 50-65 (ALCGIGIAGLIGTIAP). The Cytoplasmic portion of the chain corresponds to 66-71 (FTPLRF). The helical transmembrane segment at 72-89 (FSIPIWIYSAWKGLLLAK) threads the bilayer. At 90-144 (EYTDIQLHPSPFFMCDLFVQFPHWLPLNKWWPSMFDADGDCAEYKWYFLSLEISQ) the chain is on the periplasmic side. Cys104 and Cys130 are oxidised to a cystine. The chain crosses the membrane as a helical span at residues 145–163 (WMLIIFANYLIIAILVSLS). Over 164 to 174 (QIIDLKKWNNK) the chain is Cytoplasmic.

The protein belongs to the DsbB family.

The protein localises to the cell inner membrane. Required for disulfide bond formation in some periplasmic proteins. Acts by oxidizing the DsbA protein. In Blochmanniella pennsylvanica (strain BPEN), this protein is Disulfide bond formation protein B.